We begin with the raw amino-acid sequence, 70 residues long: Large ribosomal subunit protein eL38 (70 aa).

The protein belongs to the eukaryotic ribosomal protein eL38 family.

The sequence is that of Large ribosomal subunit protein eL38 (RpL38) from Plutella xylostella (Diamondback moth).